The following is a 359-amino-acid chain: N-acetylhexosamine 1-kinase (359 aa).

In terms of domain architecture, Protein kinase spans 21-359 (VTGIEPYGDG…IVADIMEAAR (339 aa)).

It belongs to the protein kinase superfamily. Mg(2+) serves as cofactor.

It carries out the reaction N-acetyl-D-hexosamine + ATP = N-acetyl-alpha-D-hexosamine 1-phosphate + ADP + H(+). Functionally, phosphorylates both N-acetylglucosamine (GlcNAc) and N-acetylgalactosamine (GalNAc) at similar rates. Involved in the lacto-N-biose I/galacto-N-biose (LNB/GNB) degradation pathway, which is important for host intestinal colonization by bifidobacteria. Also accepts GTP and ITP as phosphate donors. In vitro, can phosphorylate several GlcNAc and GalNAc derivatives. This is N-acetylhexosamine 1-kinase (nahK) from Bifidobacterium longum subsp. longum (strain ATCC 15707 / DSM 20219 / JCM 1217 / NCTC 11818 / E194b).